The primary structure comprises 151 residues: Ribosome maturation factor RimP (151 aa).

Belongs to the RimP family.

The protein resides in the cytoplasm. Functionally, required for maturation of 30S ribosomal subunits. This chain is Ribosome maturation factor RimP, found in Aliivibrio fischeri (strain MJ11) (Vibrio fischeri).